A 140-amino-acid chain; its full sequence is MKKTIMTRFGEVEFDPENTVLFVDGLIGFENLRDFIVMPNRKNGPLFWIQSVEEPDLAFVLTDPTNFFLDYKVVPDARERAKLGIGTDDDCHALAVVTVPPDRKVTLNLMAPVLFAPATNRAIQVVLEKSQYKTRHPLPA.

It belongs to the FliW family. As to quaternary structure, interacts with translational regulator CsrA and flagellin(s).

The protein localises to the cytoplasm. Its function is as follows. Acts as an anti-CsrA protein, binds CsrA and prevents it from repressing translation of its target genes, one of which is flagellin. Binds to flagellin and participates in the assembly of the flagellum. This chain is Flagellar assembly factor FliW, found in Syntrophotalea carbinolica (strain DSM 2380 / NBRC 103641 / GraBd1) (Pelobacter carbinolicus).